A 193-amino-acid polypeptide reads, in one-letter code: Rho-related GTP-binding protein RhoA-D (193 aa).

GTP is bound by residues 12 to 19 (GDGACGKT), 30 to 37 (FPEVYVPT), 59 to 63 (DTAGQ), 117 to 120 (NKKD), and 160 to 162 (SAK). Tyrosine 34 carries (Microbial infection) O-linked (GlcNAc) tyrosine; by Yersinia Afp18 glycosylation. The residue at position 190 (cysteine 190) is a Cysteine methyl ester. Cysteine 190 carries the S-geranylgeranyl cysteine lipid modification. A propeptide spans 191-193 (LLL) (removed in mature form).

Belongs to the small GTPase superfamily. Rho family. Post-translationally, (Microbial infection) Glycosylated at Tyr-34 by Yersinia ruckeri toxin Afp18. Mono-O-GlcNAcylation by Afp18 inhibits RhoA activation by guanine nucleotide exchange factors and blocks RhoA signaling.

Its subcellular location is the cell membrane. In terms of biological role, regulates a signal transduction pathway linking plasma membrane receptors to the assembly of focal adhesions and actin stress fibers. The chain is Rho-related GTP-binding protein RhoA-D from Danio rerio (Zebrafish).